We begin with the raw amino-acid sequence, 344 residues long: Phenylalanine--tRNA ligase alpha subunit (344 aa).

Position 256 (glutamate 256) interacts with Mg(2+).

This sequence belongs to the class-II aminoacyl-tRNA synthetase family. Phe-tRNA synthetase alpha subunit type 1 subfamily. In terms of assembly, tetramer of two alpha and two beta subunits. Mg(2+) serves as cofactor.

Its subcellular location is the cytoplasm. The enzyme catalyses tRNA(Phe) + L-phenylalanine + ATP = L-phenylalanyl-tRNA(Phe) + AMP + diphosphate + H(+). This Bacillus pumilus (strain SAFR-032) protein is Phenylalanine--tRNA ligase alpha subunit.